The sequence spans 136 residues: Histone H3 (136 aa).

Positions 1–45 are disordered; that stretch reads MARTKQTARKSTGGKAPRKQLATKAARKSAPATGGVKKPHRYRPG. N6,N6,N6-trimethyllysine; alternate is present on lysine 5. Lysine 5 bears the N6,N6-dimethyllysine; alternate mark. Lysine 5 and lysine 10 each carry N6-methyllysine; alternate. Position 10 is an N6-acetyllysine; alternate (lysine 10). The residue at position 11 (serine 11) is a Phosphoserine. Lysine 15 is modified (N6,N6-dimethyllysine; alternate). Residues lysine 15, lysine 19, lysine 24, lysine 28, and lysine 37 each carry the N6-methyllysine; alternate modification. N6-acetyllysine; alternate is present on residues lysine 15, lysine 19, lysine 24, lysine 28, and lysine 37. 2 positions are modified to N6,N6,N6-trimethyllysine; alternate: lysine 28 and lysine 37. 2 positions are modified to N6,N6-dimethyllysine; alternate: lysine 28 and lysine 37. N6-acetyllysine is present on residues lysine 57 and lysine 65. N6,N6,N6-trimethyllysine; alternate is present on lysine 80. Lysine 80 is modified (N6,N6-dimethyllysine; alternate). Lysine 80 carries the N6-methyllysine; alternate modification.

This sequence belongs to the histone H3 family. As to quaternary structure, the nucleosome is a histone octamer containing two molecules each of H2A, H2B, H3 and H4 assembled in one H3-H4 heterotetramer and two H2A-H2B heterodimers. The octamer wraps approximately 147 bp of DNA. Phosphorylated to form H3S10ph. H3S10ph promotes subsequent H3K14ac formation and is required for transcriptional activation through TBP recruitment to the promoters. Post-translationally, mono-, di- and trimethylated by the COMPASS complex to form H3K4me1/2/3. H3K4me activates gene expression by regulating transcription elongation and plays a role in telomere length maintenance. H3K4me enrichment correlates with transcription levels, and occurs in a 5' to 3' gradient with H3K4me3 enrichment at the 5'-end of genes, shifting to H3K4me2 and then H3K4me1. Methylated by SET2 to form H3K36me. H3K36me represses gene expression. Methylated by DOT1 to form H3K79me. H3K79me is required for association of SIR proteins with telomeric regions and for telomeric silencing. The COMPASS-mediated formation of H3K4me2/3 and the DOT1-mediated formation of H3K79me require H2BK123ub1. In terms of processing, acetylation of histone H3 leads to transcriptional activation. H3K14ac formation by GCN5 is promoted by H3S10ph. H3K14ac can also be formed by ESA1. H3K56ac formation occurs predominantly in newly synthesized H3 molecules during G1, S and G2/M of the cell cycle and may be involved in DNA repair.

It localises to the nucleus. The protein localises to the chromosome. Functionally, core component of nucleosome. Nucleosomes wrap and compact DNA into chromatin, limiting DNA accessibility to the cellular machineries which require DNA as a template. Histones thereby play a central role in transcription regulation, DNA repair, DNA replication and chromosomal stability. DNA accessibility is regulated via a complex set of post-translational modifications of histones, also called histone code, and nucleosome remodeling. This chain is Histone H3 (H3.1), found in Mortierella alpina (Oleaginous fungus).